The chain runs to 259 residues: Sorbitol-6-phosphate 2-dehydrogenase (259 aa).

4 to 33 serves as a coordination point for NAD(+); the sequence is VAVVIGGGQTLGAFLCHGLAAEGYRVAVVD. Position 141 (serine 141) interacts with substrate. The active-site Proton acceptor is tyrosine 154.

It belongs to the short-chain dehydrogenases/reductases (SDR) family. Homotetramer.

It catalyses the reaction D-sorbitol 6-phosphate + NAD(+) = beta-D-fructose 6-phosphate + NADH + H(+). The protein operates within carbohydrate metabolism; D-sorbitol degradation; D-fructose 6-phosphate from D-sorbitol 6-phosphate: step 1/1. In Escherichia coli (strain K12), this protein is Sorbitol-6-phosphate 2-dehydrogenase (srlD).